The sequence spans 69 residues: Alternative ribosome-rescue factor A (69 aa).

It belongs to the alternative ribosome-rescue factor A family. In terms of assembly, interacts with the 70S ribosome and release factor 2.

In terms of biological role, rescues ribosomes stalled at the 3' end of non-stop mRNAs. Recruits release factor 2 (RF2) to the stalled ribosome, helping position it correctly in the ribosomal A site so its GGQ motif can hydrolyze the peptidyl-tRNA bond. The polypeptide is Alternative ribosome-rescue factor A (arfA) (Haemophilus influenzae (strain ATCC 51907 / DSM 11121 / KW20 / Rd)).